A 370-amino-acid polypeptide reads, in one-letter code: Queuine tRNA-ribosyltransferase (370 aa).

D89 acts as the Proton acceptor in catalysis. Residues 89 to 93 (DSGGF), D143, Q187, and G214 each bind substrate. Positions 245-251 (GVGTPED) are RNA binding. The active-site Nucleophile is D264. Positions 269–273 (TRNAR) are RNA binding; important for wobble base 34 recognition. Positions 302, 304, 307, and 333 each coordinate Zn(2+).

Belongs to the queuine tRNA-ribosyltransferase family. In terms of assembly, homodimer. Within each dimer, one monomer is responsible for RNA recognition and catalysis, while the other monomer binds to the replacement base PreQ1. Zn(2+) serves as cofactor.

It catalyses the reaction 7-aminomethyl-7-carbaguanine + guanosine(34) in tRNA = 7-aminomethyl-7-carbaguanosine(34) in tRNA + guanine. Its pathway is tRNA modification; tRNA-queuosine biosynthesis. Functionally, catalyzes the base-exchange of a guanine (G) residue with the queuine precursor 7-aminomethyl-7-deazaguanine (PreQ1) at position 34 (anticodon wobble position) in tRNAs with GU(N) anticodons (tRNA-Asp, -Asn, -His and -Tyr). Catalysis occurs through a double-displacement mechanism. The nucleophile active site attacks the C1' of nucleotide 34 to detach the guanine base from the RNA, forming a covalent enzyme-RNA intermediate. The proton acceptor active site deprotonates the incoming PreQ1, allowing a nucleophilic attack on the C1' of the ribose to form the product. After dissociation, two additional enzymatic reactions on the tRNA convert PreQ1 to queuine (Q), resulting in the hypermodified nucleoside queuosine (7-(((4,5-cis-dihydroxy-2-cyclopenten-1-yl)amino)methyl)-7-deazaguanosine). The sequence is that of Queuine tRNA-ribosyltransferase from Azoarcus sp. (strain BH72).